Reading from the N-terminus, the 175-residue chain is Thioredoxin-like protein CITRX, chloroplastic (175 aa).

The N-terminal 73 residues, 1-73, are a transit peptide targeting the chloroplast; the sequence is MQAASLAFHP…REDYLVKKLS (73 aa). Positions 74 to 175 constitute a Thioredoxin domain; sequence AKEIQELIKG…MMRDIINNDL (102 aa). Catalysis depends on nucleophile residues Cys98 and Cys101. An intrachain disulfide couples Cys98 to Cys101.

The protein belongs to the thioredoxin family. Plant CITRX-type subfamily.

The protein resides in the plastid. It is found in the chloroplast. Functionally, probable thiol-disulfide oxidoreductase that may play a role in proper chloroplast development. The protein is Thioredoxin-like protein CITRX, chloroplastic of Solanum tuberosum (Potato).